Reading from the N-terminus, the 396-residue chain is 1-deoxy-D-xylulose 5-phosphate reductoisomerase (396 aa).

Positions 15, 16, 17, 18, 41, and 130 each coordinate NADPH. Residue Lys-131 coordinates 1-deoxy-D-xylulose 5-phosphate. Residue Glu-132 participates in NADPH binding. Position 155 (Asp-155) interacts with Mn(2+). 1-deoxy-D-xylulose 5-phosphate contacts are provided by Ser-156, Glu-157, Ser-181, and His-204. Glu-157 is a binding site for Mn(2+). Gly-210 contributes to the NADPH binding site. Residues Ser-217, Asn-222, Lys-223, and Glu-226 each coordinate 1-deoxy-D-xylulose 5-phosphate. Residue Glu-226 participates in Mn(2+) binding.

It belongs to the DXR family. It depends on Mg(2+) as a cofactor. The cofactor is Mn(2+).

It carries out the reaction 2-C-methyl-D-erythritol 4-phosphate + NADP(+) = 1-deoxy-D-xylulose 5-phosphate + NADPH + H(+). It functions in the pathway isoprenoid biosynthesis; isopentenyl diphosphate biosynthesis via DXP pathway; isopentenyl diphosphate from 1-deoxy-D-xylulose 5-phosphate: step 1/6. Functionally, catalyzes the NADPH-dependent rearrangement and reduction of 1-deoxy-D-xylulose-5-phosphate (DXP) to 2-C-methyl-D-erythritol 4-phosphate (MEP). This is 1-deoxy-D-xylulose 5-phosphate reductoisomerase from Bifidobacterium longum (strain NCC 2705).